The chain runs to 209 residues: Dof zinc finger protein DOF1.6 (209 aa).

The segment covering 1 to 17 (MPSEPNQTRPTRVQPST) has biased composition (polar residues). A disordered region spans residues 1 to 29 (MPSEPNQTRPTRVQPSTAAYPPPNLAEPL). The span at 20 to 29 (YPPPNLAEPL) shows a compositional bias: pro residues. A Dof-type zinc finger spans residues 29–83 (LPCPRCNSTTTKFCYYNNYNLAQPRYYCKSCRRYWTQGGTLRDVPVGGGTRRSSS). Zn(2+)-binding residues include Cys-31, Cys-34, Cys-56, and Cys-59. The tract at residues 70–116 (RDVPVGGGTRRSSSKRHRSFSTTATSSSSSSSVITTTTQEPATTEAS) is disordered. A compositionally biased stretch (low complexity) spans 89-116 (FSTTATSSSSSSSVITTTTQEPATTEAS).

Its subcellular location is the nucleus. Transcription factor that binds specifically to a 5'-AA[AG]G-3' consensus core sequence. This is Dof zinc finger protein DOF1.6 (DOF1.6) from Arabidopsis thaliana (Mouse-ear cress).